We begin with the raw amino-acid sequence, 193 residues long: Zinc finger protein AZF3 (193 aa).

2 consecutive C2H2-type zinc fingers follow at residues 75–97 (YKCG…KASH) and 118–140 (HVCS…KRCH).

In terms of tissue distribution, expressed in roots.

The protein localises to the nucleus. In terms of biological role, transcriptional repressor probably involved in abiotic stress responses. Binds DNA in a sequence-specific manner and can repress the transactivation activity of other transcription factors. In Arabidopsis thaliana (Mouse-ear cress), this protein is Zinc finger protein AZF3 (AZF3).